Here is a 326-residue protein sequence, read N- to C-terminus: MEMO1 family protein TTHA0924 (326 aa).

It belongs to the MEMO1 family.

This Thermus thermophilus (strain ATCC 27634 / DSM 579 / HB8) protein is MEMO1 family protein TTHA0924.